The sequence spans 140 residues: MTRIAKPLIKSAMAAGLVTASMSLSTAVAHAGPSPNWDAVAQCESGGNWAANTGNGKYGGLQFKPATWAAFGGVGNPAAASREQQIAVANRVLAEQGLDAWPTCGAASGLPIALWSKPAQGIKQIINEIIWAGIQASIPR.

A signal peptide spans 1–31 (MTRIAKPLIKSAMAAGLVTASMSLSTAVAHA).

Belongs to the transglycosylase family. Rpf subfamily.

It is found in the secreted. Functionally, factor that stimulates resuscitation of dormant cells. Has peptidoglycan (PG) hydrolytic activity. The sequence is that of Resuscitation-promoting factor RpfC (rpfC) from Mycobacterium tuberculosis (strain ATCC 35801 / TMC 107 / Erdman).